We begin with the raw amino-acid sequence, 390 residues long: Glutamate 5-kinase (390 aa).

Lysine 29 lines the ATP pocket. Substrate-binding residues include serine 69, aspartate 156, and asparagine 168. 188–189 provides a ligand contact to ATP; that stretch reads TD. The PUA domain occupies 295–374; it reads SGSLIVDAGA…EQFDRILGNN (80 aa).

This sequence belongs to the glutamate 5-kinase family.

The protein localises to the cytoplasm. It catalyses the reaction L-glutamate + ATP = L-glutamyl 5-phosphate + ADP. It functions in the pathway amino-acid biosynthesis; L-proline biosynthesis; L-glutamate 5-semialdehyde from L-glutamate: step 1/2. Functionally, catalyzes the transfer of a phosphate group to glutamate to form L-glutamate 5-phosphate. The protein is Glutamate 5-kinase of Psychrobacter arcticus (strain DSM 17307 / VKM B-2377 / 273-4).